The primary structure comprises 368 residues: Nucleotide pyrophosphatase/phosphodiesterase (368 aa).

It belongs to the metallophosphoesterase superfamily. Monomer and homomer. Glycosylated.

The protein localises to the plastid. It is found in the chloroplast. Hydrolyzes pyrophosphate, phosphodiester and phosphosulfate linkages of nucleotide-sugars, sulfonucleotides and nucleoside di and triphosphates. Highest activity observed with the substrates ADP-glucose and adenosine 5'-phosphosulfate. This Hordeum vulgare (Barley) protein is Nucleotide pyrophosphatase/phosphodiesterase.